The sequence spans 421 residues: Nacrein-like protein M (421 aa).

N27 carries an N-linked (GlcNAc...) asparagine glycan. One can recognise an Alpha-carbonic anhydrase domain in the interval 33-420 (AGFSYDRSIC…KNKVTVYKSF (388 aa)). Zn(2+) contacts are provided by H132, H134, and H157. Residues 197–206 (DGFGDEPDDE) are compositionally biased toward acidic residues. Residues 197–303 (DGFGDEPDDE…GENGHKHGCR (107 aa)) are disordered. Positions 207-219 (ECKRILKGHHPDN) are enriched in basic and acidic residues. The span at 220-295 (NENGNGDNGN…NNGDNGNNGE (76 aa)) shows a compositional bias: low complexity. 24 tandem repeats follow at residues 225–227 (GDN), 228–230 (GNN), 231–233 (GYN), 234–236 (GDN), 237–239 (GNN), 240–242 (GDN), 243–245 (GNN), 246–248 (GYN), 249–251 (GDN), 252–254 (GNN), 255–257 (GDN), 258–260 (GNN), 261–263 (GYN), 264–266 (GDN), 267–269 (GNN), 270–272 (GDN), 273–275 (GNN), 276–278 (GEN), 279–281 (GNN), 282–284 (GEN), 285–287 (GNN), 288–290 (GDN), 291–292 (GN), and 294–296 (GEN). The tract at residues 225 to 296 (GDNGNNGYNG…NGDNGNNGEN (72 aa)) is 24 X 3 AA approximate tandem repeats of G-X-N. Residue 361–362 (TT) coordinates substrate.

This sequence belongs to the alpha-carbonic anhydrase family. Homooligomer; disulfide-linked. May also be disulfide-linked to insoluble organic matrix. Zn(2+) serves as cofactor. In terms of tissue distribution, expressed in the mantle.

It is found in the secreted. Its subcellular location is the extracellular space. The protein resides in the extracellular matrix. It catalyses the reaction hydrogencarbonate + H(+) = CO2 + H2O. Acts as a negative regulator for calcification in the shells of mollusks. May function both as a calcium concentrator and as a carbonic anhydrase required for production of carbonate ions, which are assembled to CaCO(3) at mineralization sites. Is important for shell formation in both the calcitic prismatic layer and the aragonitic nacreous layerr. Shows inhibitory activity of crystal formation when present in free state but, when attached to the insoluble matrix, may regulate the form and size of aragonite crystal. This is Nacrein-like protein M from Pinctada maxima (Silver-lipped pearl oyster).